Reading from the N-terminus, the 215-residue chain is Variable small protein 2 (215 aa).

The first 18 residues, 1-18, serve as a signal peptide directing secretion; the sequence is MRKRISAIIMTLFMVFMS. The N-palmitoyl cysteine moiety is linked to residue cysteine 19. The S-diacylglycerol cysteine moiety is linked to residue cysteine 19.

This sequence belongs to the variable small protein (Vsp) family.

It localises to the cell outer membrane. Functionally, the Vlp and Vsp proteins are antigenically distinct proteins, only one vlp or vsp gene is transcriptionally active at any one time. Switching between these genes is a mechanism of host immune response evasion. This is Variable small protein 2 from Borrelia hermsii.